We begin with the raw amino-acid sequence, 227 residues long: Translation initiation factor 6 (227 aa).

It belongs to the eIF-6 family.

Functionally, binds to the 50S ribosomal subunit and prevents its association with the 30S ribosomal subunit to form the 70S initiation complex. The protein is Translation initiation factor 6 of Methanococcus maripaludis (strain C5 / ATCC BAA-1333).